A 204-amino-acid chain; its full sequence is Nucleoside triphosphate pyrophosphatase (204 aa).

D79 (proton acceptor) is an active-site residue.

Belongs to the Maf family. A divalent metal cation is required as a cofactor.

It is found in the cytoplasm. The enzyme catalyses a ribonucleoside 5'-triphosphate + H2O = a ribonucleoside 5'-phosphate + diphosphate + H(+). It carries out the reaction a 2'-deoxyribonucleoside 5'-triphosphate + H2O = a 2'-deoxyribonucleoside 5'-phosphate + diphosphate + H(+). Functionally, nucleoside triphosphate pyrophosphatase. May have a dual role in cell division arrest and in preventing the incorporation of modified nucleotides into cellular nucleic acids. The sequence is that of Nucleoside triphosphate pyrophosphatase from Trichodesmium erythraeum (strain IMS101).